Consider the following 173-residue polypeptide: Protein-export protein SecB (173 aa).

It belongs to the SecB family. As to quaternary structure, homotetramer, a dimer of dimers. One homotetramer interacts with 1 SecA dimer.

It is found in the cytoplasm. One of the proteins required for the normal export of preproteins out of the cell cytoplasm. It is a molecular chaperone that binds to a subset of precursor proteins, maintaining them in a translocation-competent state. It also specifically binds to its receptor SecA. The polypeptide is Protein-export protein SecB (Ralstonia nicotianae (strain ATCC BAA-1114 / GMI1000) (Ralstonia solanacearum)).